We begin with the raw amino-acid sequence, 165 residues long: Large ribosomal subunit protein uL10 (165 aa).

It belongs to the universal ribosomal protein uL10 family. Part of the ribosomal stalk of the 50S ribosomal subunit. The N-terminus interacts with L11 and the large rRNA to form the base of the stalk. The C-terminus forms an elongated spine to which L12 dimers bind in a sequential fashion forming a multimeric L10(L12)X complex.

In terms of biological role, forms part of the ribosomal stalk, playing a central role in the interaction of the ribosome with GTP-bound translation factors. The chain is Large ribosomal subunit protein uL10 from Cronobacter sakazakii (strain ATCC BAA-894) (Enterobacter sakazakii).